The chain runs to 225 residues: Uracil-DNA glycosylase (225 aa).

Residue Asp65 is the Proton acceptor of the active site.

This sequence belongs to the uracil-DNA glycosylase (UDG) superfamily. UNG family.

The protein localises to the cytoplasm. The catalysed reaction is Hydrolyzes single-stranded DNA or mismatched double-stranded DNA and polynucleotides, releasing free uracil.. Excises uracil residues from the DNA which can arise as a result of misincorporation of dUMP residues by DNA polymerase or due to deamination of cytosine. The sequence is that of Uracil-DNA glycosylase from Clostridium perfringens (strain SM101 / Type A).